The chain runs to 589 residues: uncharacterized protein (589 aa).

5 helical membrane-spanning segments follow: residues 11–31 (LNWILTALFWVVLCFSVTMLA), 57–77 (LILMLLVLFIMILLEVRFSVL), 97–117 (FWFFAKLNALLVVAQVIHAIA), 190–210 (IEFTIILWSLSGVLTLFGFNI), and 213–233 (GVVFFIYAFIIFATLMSVWIG). An ABC transmembrane type-1 domain is found at 57–357 (LILMLLVLFI…FRLFYEQFTL (301 aa)). The ABC transporter domain maps to 390-587 (VALKNFGIKD…QLKLDVCLLC (198 aa)). 423-430 (GASGTGKT) provides a ligand contact to ATP.

This sequence belongs to the ABC transporter superfamily.

It localises to the cell inner membrane. This is an uncharacterized protein from Haemophilus influenzae (strain ATCC 51907 / DSM 11121 / KW20 / Rd).